The chain runs to 557 residues: TBCC domain-containing protein 1 (557 aa).

Residues 290-435 (TTKRAKIACN…LEDHMARTGL (146 aa)) form the C-CAP/cofactor C-like domain.

Belongs to the TBCC family.

It is found in the cytoplasm. It localises to the cytoskeleton. The protein localises to the microtubule organizing center. Its subcellular location is the centrosome. The protein resides in the spindle pole. Functionally, plays a role in the regulation of centrosome and Golgi apparatus positioning, with consequences on cell shape and cell migration. The polypeptide is TBCC domain-containing protein 1 (TBCCD1) (Bos taurus (Bovine)).